A 130-amino-acid chain; its full sequence is UPF0251 protein Mevan_1492 (130 aa).

The protein belongs to the UPF0251 family.

The protein is UPF0251 protein Mevan_1492 of Methanococcus vannielii (strain ATCC 35089 / DSM 1224 / JCM 13029 / OCM 148 / SB).